A 251-amino-acid polypeptide reads, in one-letter code: Flap endonuclease Xni (251 aa).

Aspartate 104 provides a ligand contact to Mg(2+). The 5'-3' exonuclease domain occupies 160 to 249; sequence VQPQQLPDYW…IDGNLQQLRL (90 aa). K(+)-binding residues include leucine 171, alanine 172, proline 180, valine 182, and isoleucine 185. The tract at residues 184 to 189 is interaction with DNA; sequence GIGPKS.

Belongs to the Xni family. The cofactor is Mg(2+). K(+) is required as a cofactor.

In terms of biological role, has flap endonuclease activity. During DNA replication, flap endonucleases cleave the 5'-overhanging flap structure that is generated by displacement synthesis when DNA polymerase encounters the 5'-end of a downstream Okazaki fragment. This chain is Flap endonuclease Xni, found in Escherichia coli O6:K15:H31 (strain 536 / UPEC).